The primary structure comprises 414 residues: Probable tRNA pseudouridine synthase D (414 aa).

Residue aspartate 90 is the Nucleophile of the active site. The region spanning 162-382 is the TRUD domain; the sequence is GFPNFFGVQR…SSGDYRIISA (221 aa).

The protein belongs to the pseudouridine synthase TruD family.

It carries out the reaction uridine(13) in tRNA = pseudouridine(13) in tRNA. Its function is as follows. Could be responsible for synthesis of pseudouridine from uracil-13 in transfer RNAs. This chain is Probable tRNA pseudouridine synthase D, found in Picrophilus torridus (strain ATCC 700027 / DSM 9790 / JCM 10055 / NBRC 100828 / KAW 2/3).